We begin with the raw amino-acid sequence, 300 residues long: Enoyl-CoA hydratase domain-containing protein 3, mitochondrial (300 aa).

Residues 1–66 (MAVVAGLRAF…RNIVLSNPRR (66 aa)) constitute a mitochondrion transit peptide. The interval 34–53 (GSAGPAGSESEPRLTSTRQQ) is disordered. Lys-110 carries the N6-succinyllysine modification.

This sequence belongs to the enoyl-CoA hydratase/isomerase family.

Its subcellular location is the mitochondrion. Its function is as follows. May play a role in fatty acid biosynthesis and insulin sensitivity. The polypeptide is Enoyl-CoA hydratase domain-containing protein 3, mitochondrial (Mus musculus (Mouse)).